A 392-amino-acid chain; its full sequence is MDYYDVLGVSKTASPEEIKKSYRKLAVKYHPDKNPGDAEAEKRFKEVSEAYEVLSDPQKRESYDRYGKNGPFAGAGGFGGMGGMGNMEDALRTFMGAFGGEFGGGGSFFEGLFGGLGEAFGMRGDPAGARQGASKKVHITLTFEEAARGVEKELLVSGYKTCETCLGSGAASEQGIKCCDRCKGSGQIVQSRGFFSMASTCPECGGEGRVITDPCSNCRGQGRIKDKRNVHVQIPAGVDSGMRLKMEGYGDAGQNGAPSGDLYVFIDVEAHPVFERRGDDLILELPIGFVDAALGMKKEIPTLLKEGMCRLTVPEGIQSGTILKVKNQGFPNVHGRGRGDLLVRVSVETPQNLSEEQKELLRKFATTEKAENFPKKRGFLDKIKGFFSDFAV.

The J domain maps to 2-67; the sequence is DYYDVLGVSK…QKRESYDRYG (66 aa). A CR-type zinc finger spans residues 149–227; sequence GVEKELLVSG…CRGQGRIKDK (79 aa). Zn(2+) contacts are provided by Cys-162, Cys-165, Cys-179, Cys-182, Cys-201, Cys-204, Cys-215, and Cys-218. CXXCXGXG motif repeat units lie at residues 162–169, 179–186, 201–208, and 215–222; these read CETCLGSG, CDRCKGSG, CPECGGEG, and CSNCRGQG.

The protein belongs to the DnaJ family. As to quaternary structure, homodimer. Zn(2+) is required as a cofactor.

It localises to the cytoplasm. In terms of biological role, participates actively in the response to hyperosmotic and heat shock by preventing the aggregation of stress-denatured proteins and by disaggregating proteins, also in an autonomous, DnaK-independent fashion. Unfolded proteins bind initially to DnaJ; upon interaction with the DnaJ-bound protein, DnaK hydrolyzes its bound ATP, resulting in the formation of a stable complex. GrpE releases ADP from DnaK; ATP binding to DnaK triggers the release of the substrate protein, thus completing the reaction cycle. Several rounds of ATP-dependent interactions between DnaJ, DnaK and GrpE are required for fully efficient folding. Also involved, together with DnaK and GrpE, in the DNA replication of plasmids through activation of initiation proteins. The protein is Chaperone protein DnaJ of Chlamydia caviae (strain ATCC VR-813 / DSM 19441 / 03DC25 / GPIC) (Chlamydophila caviae).